A 308-amino-acid polypeptide reads, in one-letter code: D-alanine--D-alanine ligase (308 aa).

The ATP-grasp domain occupies 105–302; it reads KAIFRSLGLA…FPDLCDRILD (198 aa). 133-188 provides a ligand contact to ATP; that stretch reads DLPFGLPCVVKPAGEGSSVGVHLVNAAAELGPACRDAAGYAGDVIVERYVKGTEVD. Mg(2+) is bound by residues Asp-256, Glu-269, and Asn-271.

It belongs to the D-alanine--D-alanine ligase family. Mg(2+) serves as cofactor. It depends on Mn(2+) as a cofactor.

The protein localises to the cytoplasm. It carries out the reaction 2 D-alanine + ATP = D-alanyl-D-alanine + ADP + phosphate + H(+). It functions in the pathway cell wall biogenesis; peptidoglycan biosynthesis. Cell wall formation. This is D-alanine--D-alanine ligase from Anaeromyxobacter dehalogenans (strain 2CP-C).